Reading from the N-terminus, the 113-residue chain is Replication initiation control protein YabA (113 aa).

4 residues coordinate Zn(2+): histidine 88, cysteine 90, cysteine 104, and cysteine 107.

It belongs to the YabA family. In terms of assembly, homotetramer. Interacts with both DnaA and DnaN, acting as a bridge between these two proteins. Zn(2+) serves as cofactor.

Its subcellular location is the cytoplasm. It is found in the nucleoid. Involved in control of chromosome replication initiation. Inhibits the cooperative binding of DnaA to the oriC region, thus negatively regulating initiation of chromosome replication. Inhibits the ability of DnaA-ATP to form a helix on DNA; does not disassemble preformed DnaA-DNA helices. Decreases the residence time of DnaA on the chromosome at its binding sites (oriC, replication forks and promoter-binding sites). Tethers DnaA to the replication machinery via the DNA polymerase beta sliding clamp subunit (dnaN). Associates with oriC and other DnaA targets on the chromosome in a DnaA-dependent manner. This is Replication initiation control protein YabA from Staphylococcus saprophyticus subsp. saprophyticus (strain ATCC 15305 / DSM 20229 / NCIMB 8711 / NCTC 7292 / S-41).